Reading from the N-terminus, the 24-residue chain is Glutathione S-transferase (24 aa).

The protein belongs to the GST superfamily. As to quaternary structure, monomer and homodimer.

It is found in the cytoplasm. It catalyses the reaction RX + glutathione = an S-substituted glutathione + a halide anion + H(+). Its function is as follows. Conjugation of reduced glutathione to a wide number of exogenous and endogenous hydrophobic electrophiles. The protein is Glutathione S-transferase of Pseudomonas sp. (strain CF600).